Consider the following 207-residue polypeptide: Outer-membrane lipoprotein LolB (207 aa).

The signal sequence occupies residues methionine 1–alanine 21. Cysteine 22 carries the N-palmitoyl cysteine lipid modification. A lipid anchor (S-diacylglycerol cysteine) is attached at cysteine 22.

This sequence belongs to the LolB family. Monomer.

Its subcellular location is the cell outer membrane. Its function is as follows. Plays a critical role in the incorporation of lipoproteins in the outer membrane after they are released by the LolA protein. This chain is Outer-membrane lipoprotein LolB, found in Pectobacterium atrosepticum (strain SCRI 1043 / ATCC BAA-672) (Erwinia carotovora subsp. atroseptica).